The chain runs to 1309 residues: Lysine-specific demethylase 2B (1309 aa).

A Phosphoserine modification is found at Ser-26. A JmjC domain is found at 147-315; sequence FSHTKLEHLV…MQLRIYEIED (169 aa). Thr-208 contributes to the substrate binding site. Residues His-211 and Asp-213 each coordinate Fe cation. Lys-228 contacts substrate. His-283 is a Fe cation binding site. Over residues 378–403 the composition is skewed to acidic residues; the sequence is DMEEESCEQQPQEEEEEEEDKEEEGD. The segment at 378–476 is disordered; that stretch reads DMEEESCEQQ…PTGSPATEVS (99 aa). A compositionally biased stretch (basic and acidic residues) spans 404–413; that stretch reads GADKTPKPPT. Residues 415–424 show a composition bias toward low complexity; it reads DPTSPTSTPP. Ser-447 and Ser-450 each carry phosphoserine. The residue at position 466 (Thr-466) is a Phosphothreonine. Polar residues predominate over residues 467-476; sequence PTGSPATEVS. A Phosphoserine modification is found at Ser-470. The CXXC-type zinc-finger motif lies at 579-625; it reads ARRRRTRCRKCEACLRTECGECHFCKDMKKFGGPGRMKQSCIMRQCI. Positions 586, 589, 592, 597, 600, 603, 619, 624, 635, 638, 661, 664, 669, 672, 692, and 695 each coordinate Zn(2+). A PHD-type zinc finger spans residues 632–698; it reads TAVCLVCGEA…CWECPKCNHA (67 aa). 2 disordered regions span residues 700–816 and 828–1005; these read KTGK…SLSP and QLKP…SASP. Residues 722 to 772 are compositionally biased toward basic and acidic residues; that stretch reads KEQKMNRDNKEGQEPAKRRSECEEAPRRRSDEHPKKVPADGILRRKSDDVH. Residues 792–816 are compositionally biased toward low complexity; sequence SSLQTSPGSSSHLSPRPPLGSSLSP. Residues Lys-830 and Lys-863 each participate in a glycyl lysine isopeptide (Lys-Gly) (interchain with G-Cter in SUMO2) cross-link. Over residues 883–892 the composition is skewed to polar residues; it reads SRSSSPTAGP. Over residues 905 to 914 the composition is skewed to basic residues; that stretch reads KVKMRRKRRL. Residues 915 to 933 are compositionally biased toward basic and acidic residues; it reads VNKELSKELSKELNHEIQK. Residues 916–944 adopt a coiled-coil conformation; it reads NKELSKELSKELNHEIQKTESTLAHESQQ. Phosphoserine is present on Ser-924. Polar residues predominate over residues 934–946; that stretch reads TESTLAHESQQPI. Residues Ser-948 and Ser-952 each carry the phosphoserine modification. A compositionally biased stretch (basic and acidic residues) spans 955-968; sequence DEPKRPLSHCERPH. Phosphoserine occurs at positions 991 and 1004. The F-box domain occupies 1032 to 1078; sequence DGAAHVMHREVWMAVFSYLSHRDLCVCMRVCRTWNRWCCDKRLWTRI. 6 LRR repeats span residues 1106–1127, 1129–1155, 1195–1220, 1221–1250, 1251–1275, and 1276–1309; these read WTNI…LRDL, LSGC…DVQW, GLDI…QLSY, CNHI…NLSD, CNKV…DLRY, and CKQV…QKLS.

This sequence belongs to the JHDM1 histone demethylase family. Interacts with SKP1, forming heterodimers. The KDM2B-SKP1 heterodimeric complex interacts with the PCGF1-BCORL heterodimeric complex to form a homotetrameric polycomb repression complex 1 (PRC1.1). Directly interacts with CUL1. The SKP1-KDM2B interacts with UBB. Fe(2+) serves as cofactor.

It localises to the nucleus. Its subcellular location is the nucleolus. It is found in the chromosome. It carries out the reaction N(6),N(6)-dimethyl-L-lysyl(36)-[histone H3] + 2 2-oxoglutarate + 2 O2 = L-lysyl(36)-[histone H3] + 2 formaldehyde + 2 succinate + 2 CO2. With respect to regulation, histone demethylase activity is inhibited by fumarate. Histone demethylase that demethylates 'Lys-4' and 'Lys-36' of histone H3, thereby playing a central role in histone code. Preferentially demethylates trimethylated H3 'Lys-4' and dimethylated H3 'Lys-36' residue while it has weak or no activity for mono- and tri-methylated H3 'Lys-36'. Preferentially binds the transcribed region of ribosomal RNA and represses the transcription of ribosomal RNA genes which inhibits cell growth and proliferation. May also serve as a substrate-recognition component of the SCF (SKP1-CUL1-F-box protein)-type E3 ubiquitin ligase complex. This chain is Lysine-specific demethylase 2B (Kdm2b), found in Mus musculus (Mouse).